The following is a 201-amino-acid chain: Large ribosomal subunit protein uL4 (201 aa).

Positions 45–71 (AQKTRAEVTGSGKKPWRQKGTGRARAG) are disordered.

This sequence belongs to the universal ribosomal protein uL4 family. Part of the 50S ribosomal subunit.

Its function is as follows. One of the primary rRNA binding proteins, this protein initially binds near the 5'-end of the 23S rRNA. It is important during the early stages of 50S assembly. It makes multiple contacts with different domains of the 23S rRNA in the assembled 50S subunit and ribosome. In terms of biological role, forms part of the polypeptide exit tunnel. This chain is Large ribosomal subunit protein uL4, found in Shewanella oneidensis (strain ATCC 700550 / JCM 31522 / CIP 106686 / LMG 19005 / NCIMB 14063 / MR-1).